The sequence spans 278 residues: S-formylglutathione hydrolase YeiG (278 aa).

Residues serine 145, aspartate 223, and histidine 256 each act as charge relay system in the active site.

The protein belongs to the esterase D family.

The enzyme catalyses S-formylglutathione + H2O = formate + glutathione + H(+). Its function is as follows. Serine hydrolase involved in the detoxification of formaldehyde. Hydrolyzes S-formylglutathione to glutathione and formate. The sequence is that of S-formylglutathione hydrolase YeiG (yeiG) from Escherichia coli (strain UTI89 / UPEC).